The primary structure comprises 488 residues: V-type proton ATPase subunit B 1 (488 aa).

This sequence belongs to the ATPase alpha/beta chains family. In terms of assembly, V-ATPase is a heteromultimeric enzyme composed of a peripheral catalytic V1 complex (main components: subunits A, B, C, D, E, and F) attached to an integral membrane V0 proton pore complex (main component: the proteolipid protein).

In terms of biological role, non-catalytic subunit of the peripheral V1 complex of vacuolar ATPase. V-ATPase is responsible for acidifying a variety of intracellular compartments in eukaryotic cells. This is V-type proton ATPase subunit B 1 from Hordeum vulgare (Barley).